We begin with the raw amino-acid sequence, 171 residues long: Adenine phosphoribosyltransferase (171 aa).

Belongs to the purine/pyrimidine phosphoribosyltransferase family. Homodimer.

Its subcellular location is the cytoplasm. It catalyses the reaction AMP + diphosphate = 5-phospho-alpha-D-ribose 1-diphosphate + adenine. It functions in the pathway purine metabolism; AMP biosynthesis via salvage pathway; AMP from adenine: step 1/1. In terms of biological role, catalyzes a salvage reaction resulting in the formation of AMP, that is energically less costly than de novo synthesis. This chain is Adenine phosphoribosyltransferase, found in Geobacter metallireducens (strain ATCC 53774 / DSM 7210 / GS-15).